Here is a 130-residue protein sequence, read N- to C-terminus: Small ribosomal subunit protein uS9 (130 aa).

Residues 98-130 form a disordered region; it reads LKRAGLLTRDPRMKERKKPGLKKARRSPQFSKR. Basic residues predominate over residues 111-130; that stretch reads KERKKPGLKKARRSPQFSKR.

Belongs to the universal ribosomal protein uS9 family.

The polypeptide is Small ribosomal subunit protein uS9 (Staphylococcus epidermidis (strain ATCC 35984 / DSM 28319 / BCRC 17069 / CCUG 31568 / BM 3577 / RP62A)).